The primary structure comprises 434 residues: Enolase (434 aa).

Gln-168 is a binding site for (2R)-2-phosphoglycerate. The active-site Proton donor is Glu-210. Mg(2+) contacts are provided by Asp-247, Glu-292, and Asp-319. (2R)-2-phosphoglycerate-binding residues include Lys-344, Arg-373, Ser-374, and Lys-395. Catalysis depends on Lys-344, which acts as the Proton acceptor.

The protein belongs to the enolase family. Requires Mg(2+) as cofactor.

It is found in the cytoplasm. The protein resides in the secreted. The protein localises to the cell surface. It carries out the reaction (2R)-2-phosphoglycerate = phosphoenolpyruvate + H2O. It participates in carbohydrate degradation; glycolysis; pyruvate from D-glyceraldehyde 3-phosphate: step 4/5. Functionally, catalyzes the reversible conversion of 2-phosphoglycerate (2-PG) into phosphoenolpyruvate (PEP). It is essential for the degradation of carbohydrates via glycolysis. The protein is Enolase of Endomicrobium trichonymphae.